The sequence spans 151 residues: Ribosomal RNA large subunit methyltransferase H (151 aa).

S-adenosyl-L-methionine-binding positions include alanine 101 and 119 to 124; that span reads LSEMTF.

This sequence belongs to the RNA methyltransferase RlmH family. Homodimer.

The protein resides in the cytoplasm. It catalyses the reaction pseudouridine(1915) in 23S rRNA + S-adenosyl-L-methionine = N(3)-methylpseudouridine(1915) in 23S rRNA + S-adenosyl-L-homocysteine + H(+). Its function is as follows. Specifically methylates the pseudouridine at position 1915 (m3Psi1915) in 23S rRNA. The protein is Ribosomal RNA large subunit methyltransferase H of Helicobacter pylori (strain G27).